Consider the following 380-residue polypeptide: Alkanesulfonate monooxygenase (380 aa).

The protein belongs to the SsuD family. As to quaternary structure, homotetramer.

It catalyses the reaction an alkanesulfonate + FMNH2 + O2 = an aldehyde + FMN + sulfite + H2O + 2 H(+). In terms of biological role, catalyzes the desulfonation of aliphatic sulfonates. In Pectobacterium atrosepticum (strain SCRI 1043 / ATCC BAA-672) (Erwinia carotovora subsp. atroseptica), this protein is Alkanesulfonate monooxygenase.